Here is a 122-residue protein sequence, read N- to C-terminus: uncharacterized protein (122 aa).

2 consecutive transmembrane segments (helical) span residues 9–29 and 60–80; these read VATV…STWV and LFSF…CLIM.

It is found in the cytoplasm. Its subcellular location is the membrane. This is an uncharacterized protein from Schizosaccharomyces pombe (strain 972 / ATCC 24843) (Fission yeast).